The primary structure comprises 149 residues: NPC intracellular cholesterol transporter 2 (149 aa).

The N-terminal stretch at 1–19 (MRFLAATILLLALVAASQA) is a signal peptide. Disulfide bonds link C27-C140, C42-C47, and C93-C99. N-linked (GlcNAc...) asparagine glycosylation is found at N58 and N69. K116 carries the N6-acetyllysine modification.

Belongs to the NPC2 family. Interacts with NPC1 (via the second lumenal domain) in a cholestrol-dependent manner. Interacts with NUS1/NgBR, the interaction stabilizes NCP2 and regulates cholesterol trafficking. Interacts with DHDDS. Interacts with NEDD4L (via C2 domain). Interacts with NPC1L1. N-glycosylated. As to expression, detected in liver and bile. Detected in epididymis (at protein level). Detected in caput epididymis, corpus epididymis, cauda epididymis and ovary.

The protein localises to the secreted. Its subcellular location is the endoplasmic reticulum. The protein resides in the lysosome. It carries out the reaction cholesterol(in) = cholesterol(out). Intracellular cholesterol transporter which acts in concert with NPC1 and plays an important role in the egress of cholesterol from the lysosomal compartment. Unesterified cholesterol that has been released from LDLs in the lumen of the late endosomes/lysosomes is transferred by NPC2 to the cholesterol-binding pocket in the N-terminal domain of NPC1. May bind and mobilize cholesterol that is associated with membranes. NPC2 binds cholesterol with a 1:1 stoichiometry. Can bind a variety of sterols, including lathosterol, desmosterol and the plant sterols stigmasterol and beta-sitosterol. The secreted form of NCP2 regulates biliary cholesterol secretion via stimulation of ABCG5/ABCG8-mediated cholesterol transport. The polypeptide is NPC intracellular cholesterol transporter 2 (Mus musculus (Mouse)).